Reading from the N-terminus, the 112-residue chain is Protein Churchill (112 aa).

The Zn(2+) site is built by Cys-2, Cys-5, Cys-30, Cys-33, His-59, Cys-61, Cys-64, His-66, His-71, Cys-88, and Cys-91.

Belongs to the Churchill family.

Functionally, transcriptional activator that mediates FGF signaling during neural development. Plays a role in the regulation of cell movement. Does not bind DNA by itself. This Mus musculus (Mouse) protein is Protein Churchill (Churc1).